The primary structure comprises 1273 residues: Clustered mitochondria protein homolog (1273 aa).

The 256-residue stretch at 344-599 folds into the Clu domain; it reads PANNADYSRM…NTYPLDVKFA (256 aa). TPR repeat units follow at residues 981-1013, 1022-1055, and 1151-1184; these read SDQKWAEGSMLLNEDQNAALTLFAQAIAIKEEV, AEKYLTLSTVYSKLGLTPEAVAFCRKSCAIYERV, and ATLESRIGNLYASINDFHNAMEHISKTPRIFTRE. Disordered regions lie at residues 1217–1242 and 1254–1273; these read AEQASVNSGSRKKNVNQKADAPKAEL and IEGGSTEKSKKKSSKKKGKK. Residues 1262–1273 show a composition bias toward basic residues; the sequence is SKKKSSKKKGKK.

It belongs to the CLU family. In terms of assembly, may associate with the eukaryotic translation initiation factor 3 (eIF-3) complex.

It localises to the cytoplasm. Its function is as follows. mRNA-binding protein involved in proper cytoplasmic distribution of mitochondria. This chain is Clustered mitochondria protein homolog, found in Vanderwaltozyma polyspora (strain ATCC 22028 / DSM 70294 / BCRC 21397 / CBS 2163 / NBRC 10782 / NRRL Y-8283 / UCD 57-17) (Kluyveromyces polysporus).